We begin with the raw amino-acid sequence, 340 residues long: Gigasin-2 (340 aa).

The N-terminal stretch at 1 to 21 is a signal peptide; the sequence is MNKMSPLYVLALCCLATTVFA. 2 EGF-like domains span residues 22–57 and 65–97; these read KYDC…EDCG and TAAN…DMCE. 6 cysteine pairs are disulfide-bonded: C25–C39, C33–C45, C47–C56, C69–C79, C73–C85, and C87–C96.

Component of the organic matrix of calcified shell layers.

This chain is Gigasin-2, found in Magallana gigas (Pacific oyster).